We begin with the raw amino-acid sequence, 391 residues long: 3-ketoacyl-CoA thiolase (391 aa).

The Acyl-thioester intermediate role is filled by C95. Catalysis depends on proton acceptor residues H347 and C377.

The protein belongs to the thiolase-like superfamily. Thiolase family. In terms of assembly, heterotetramer of two alpha chains (FadB) and two beta chains (FadA).

Its subcellular location is the cytoplasm. The enzyme catalyses an acyl-CoA + acetyl-CoA = a 3-oxoacyl-CoA + CoA. The protein operates within lipid metabolism; fatty acid beta-oxidation. Catalyzes the final step of fatty acid oxidation in which acetyl-CoA is released and the CoA ester of a fatty acid two carbons shorter is formed. The polypeptide is 3-ketoacyl-CoA thiolase (Vibrio parahaemolyticus serotype O3:K6 (strain RIMD 2210633)).